The sequence spans 222 residues: Collectrin (222 aa).

The N-terminal stretch at 1–14 (MLWLLFFLVTAIHA) is a signal peptide. Topologically, residues 15 to 141 (ELCQPGAENA…LAPPMDPSVP (127 aa)) are extracellular. Positions 21-222 (AENAFKVRLS…MTEDERLTPL (202 aa)) constitute a Collectrin-like domain. 2 N-linked (GlcNAc...) asparagine glycosylation sites follow: Asn76 and Asn93. A helical membrane pass occupies residues 142 to 162 (IWIIIFGVIFCIIIVAIALLI). The Cytoplasmic segment spans residues 163–222 (LSGIWQRRRKNKEPSEVDDAEDKCENMITIENGIPSDPLDMKGGHINDAFMTEDERLTPL). A phosphothreonine mark is found at Thr214 and Thr220.

Belongs to the CLTRN family. As to quaternary structure, monomer. Homodimer; dimerization prevents CLTRN cleavage by BACE2. Interacts with SLC6A18; this interaction regulates the trafficking of SLC6A18 to the cell membrane and its amino acid transporter activity. Interacts with SLC6A19; this interaction regulates the trafficking of SLC6A19 to the cell membrane and its amino acid transporter activity. Interacts with SNAPIN. Glycosylated. Glycosylation is required for plasma membrane localization and for its cleavage by BACE2. In terms of processing, proteolytically processed in pancreatic beta cells by BACE2 leading to the generation and extracellular release of soluble CLTRN, and a corresponding cell-associated C-terminal fragment which is later cleaved by gamma-secretase. This shedding process inactivates CLTRN. Three cleavage sites have been identified for BACE2, two clustered sites after Phe-116 and Leu-118 and a more membrane proximal site at Phe-125; the preferred BACE2 cleavage site seems to be between Phe-125 and Leu-126, Phe-116 and Leu-118 act as alternative sites. As to expression, kidney; collecting ducts. Pancreas; beta cells of islets.

It is found in the cell membrane. Functionally, plays an important role in amino acid transport by acting as binding partner of amino acid transporters SLC6A18 and SLC6A19, regulating their trafficking on the cell surface and their amino acid transporter activity. May also play a role in trafficking of amino acid transporters SLC3A1 and SLC7A9 to the renal cortical cell membrane. Regulator of SNARE complex function. Stimulator of beta cell replication. In Homo sapiens (Human), this protein is Collectrin.